Reading from the N-terminus, the 100-residue chain is MEIAVIGNSEFILGFRLAGIRKTYTAENDEKLLESVNSVLADGQVGILVLNSSDMERLPRRLRTTLENSVKPTVIALGGEEGGLSMRERIKRSVGVDLWK.

Belongs to the V-ATPase F subunit family. As to quaternary structure, has multiple subunits with at least A(3), B(3), C, D, E, F, H, I and proteolipid K(x).

It localises to the cell membrane. Its function is as follows. Component of the A-type ATP synthase that produces ATP from ADP in the presence of a proton gradient across the membrane. In Methanoregula boonei (strain DSM 21154 / JCM 14090 / 6A8), this protein is A-type ATP synthase subunit F.